We begin with the raw amino-acid sequence, 271 residues long: Formamidopyrimidine-DNA glycosylase (271 aa).

Pro-2 acts as the Schiff-base intermediate with DNA in catalysis. Glu-3 (proton donor) is an active-site residue. Lys-58 (proton donor; for beta-elimination activity) is an active-site residue. His-92, Arg-111, and Arg-152 together coordinate DNA. The FPG-type zinc finger occupies 237 to 271 (FVYGRQQQPCKQCGSLLRQTTIRQRTTVWCGHCQG). Catalysis depends on Arg-261, which acts as the Proton donor; for delta-elimination activity.

It belongs to the FPG family. In terms of assembly, monomer. It depends on Zn(2+) as a cofactor.

The enzyme catalyses Hydrolysis of DNA containing ring-opened 7-methylguanine residues, releasing 2,6-diamino-4-hydroxy-5-(N-methyl)formamidopyrimidine.. It carries out the reaction 2'-deoxyribonucleotide-(2'-deoxyribose 5'-phosphate)-2'-deoxyribonucleotide-DNA = a 3'-end 2'-deoxyribonucleotide-(2,3-dehydro-2,3-deoxyribose 5'-phosphate)-DNA + a 5'-end 5'-phospho-2'-deoxyribonucleoside-DNA + H(+). Its function is as follows. Involved in base excision repair of DNA damaged by oxidation or by mutagenic agents. Acts as a DNA glycosylase that recognizes and removes damaged bases. Has a preference for oxidized purines, such as 7,8-dihydro-8-oxoguanine (8-oxoG). Has AP (apurinic/apyrimidinic) lyase activity and introduces nicks in the DNA strand. Cleaves the DNA backbone by beta-delta elimination to generate a single-strand break at the site of the removed base with both 3'- and 5'-phosphates. This chain is Formamidopyrimidine-DNA glycosylase (mutM1), found in Xylella fastidiosa (strain 9a5c).